A 540-amino-acid polypeptide reads, in one-letter code: Upstream-binding protein 1 (540 aa).

A Phosphoserine modification is found at serine 22. The Grh/CP2 DB domain occupies 60-296 (EHPPFQYVMC…EQKKSSKRTL (237 aa)). Disordered regions lie at residues 236 to 270 (KPKG…DTTI) and 285 to 368 (EHEQ…QPSA). Residues 238–262 (KGADRKQKTDREKMEKRTAHEKEKY) are compositionally biased toward basic and acidic residues. A compositionally biased stretch (polar residues) spans 320 to 368 (YVNNSPSPAPTFTSPQQSTCSVPDSNSSSPNHQGDGASQTSGEQIQPSA). Residues serine 390 and serine 393 each carry the phosphoserine modification.

The protein belongs to the grh/CP2 family. CP2 subfamily. Interacts with TFCP2. Interacts with PIAS1, and is probably part of a complex containing TFCP2, UBP1 and PIAS1. Expressed in adrenal tissue, JEG-3, NCI-H295A, Hep-G2 and HeLa cell lines.

It localises to the nucleus. Its function is as follows. Functions as a transcriptional activator in a promoter context-dependent manner. Modulates the placental expression of CYP11A1. Involved in regulation of the alpha-globin gene in erythroid cells. Activation of the alpha-globin promoter in erythroid cells is via synergistic interaction with TFCP2. Involved in regulation of the alpha-globin gene in erythroid cells. Binds strongly to sequences around the HIV-1 initiation site and weakly over the TATA-box. Represses HIV-1 transcription by inhibiting the binding of TFIID to the TATA-box. This is Upstream-binding protein 1 (UBP1) from Homo sapiens (Human).